A 276-amino-acid chain; its full sequence is Undecaprenyl-diphosphatase 1 (276 aa).

A run of 6 helical transmembrane segments spans residues 44 to 63 (ALAF…IWEY), 85 to 105 (VNLL…ADLI), 109 to 129 (LFNP…MLWA), 183 to 203 (AATE…AVYS), 214 to 234 (GDFA…MLAV), and 249 to 269 (FAWY…LGMI).

It belongs to the UppP family.

The protein localises to the cell inner membrane. It catalyses the reaction di-trans,octa-cis-undecaprenyl diphosphate + H2O = di-trans,octa-cis-undecaprenyl phosphate + phosphate + H(+). Catalyzes the dephosphorylation of undecaprenyl diphosphate (UPP). Confers resistance to bacitracin. In Stutzerimonas stutzeri (strain A1501) (Pseudomonas stutzeri), this protein is Undecaprenyl-diphosphatase 1.